Reading from the N-terminus, the 364-residue chain is DNA replication and repair protein RecF (364 aa).

33–40 (GENGSGKT) provides a ligand contact to ATP.

Belongs to the RecF family.

Its subcellular location is the cytoplasm. The RecF protein is involved in DNA metabolism; it is required for DNA replication and normal SOS inducibility. RecF binds preferentially to single-stranded, linear DNA. It also seems to bind ATP. This chain is DNA replication and repair protein RecF, found in Rickettsia felis (strain ATCC VR-1525 / URRWXCal2) (Rickettsia azadi).